The chain runs to 41 residues: trp operon leader peptide (41 aa).

Its function is as follows. This protein is involved in control of the biosynthesis of tryptophan. This Vibrio parahaemolyticus serotype O3:K6 (strain RIMD 2210633) protein is trp operon leader peptide (trpL).